The chain runs to 219 residues: Ribose-5-phosphate isomerase A (219 aa).

Residues 29–32, 82–85, and 95–98 contribute to the substrate site; these read TGST, DGAD, and KGGG. The active-site Proton acceptor is the Glu104. Lys122 serves as a coordination point for substrate.

Belongs to the ribose 5-phosphate isomerase family. As to quaternary structure, homodimer.

It catalyses the reaction aldehydo-D-ribose 5-phosphate = D-ribulose 5-phosphate. Its pathway is carbohydrate degradation; pentose phosphate pathway; D-ribose 5-phosphate from D-ribulose 5-phosphate (non-oxidative stage): step 1/1. Functionally, catalyzes the reversible conversion of ribose-5-phosphate to ribulose 5-phosphate. The polypeptide is Ribose-5-phosphate isomerase A (Chromobacterium violaceum (strain ATCC 12472 / DSM 30191 / JCM 1249 / CCUG 213 / NBRC 12614 / NCIMB 9131 / NCTC 9757 / MK)).